The sequence spans 436 residues: MKKLKVVHYINNFFAGVGGEEKANIPPEMREGAVGPGMALAAALGDEAEVVATVICGDSYYGENMDSARKEILEMIKDAQPDAFVAGPAFNAGRYGVACGSIAKAVEEDLGIPSVTGMYVENPGVDMYRKDIQIIETGNSAADLRNSMPKLAKLVMKKAKGELVGPPEVEGYHMMGIRTNFFHEKRGSERAIDMLVNKLNGEKFETEYPMPVFDRVPPNPAVKDMSKVKVAIVTSGGIVPHDNPDRIESSSATRYGIYDITGMDSMSADDFTSIHGGYDRAFVVKDPNLVVPLDVMRDLEREGVIGELANYFVSTTGTGTSVGNAKGFGESFSKKLIEDGVGAVILTSTUGTCTRCGATMVKEIERAGIPVVHLATVVPISLTIGANRIVPAIGIPHPLGDPALDAKGDKKLRRELVMRGLKALQTEVDEQTVFEG.

U350 is an active-site residue. Position 350 (U350) is a non-standard amino acid, selenocysteine.

This sequence belongs to the GrdB/GrdF/GrdH family. In terms of assembly, heterotetramer of two alpha and two beta subunits. Component of the sarcosine reductase complex, together with components A and C. PB is substrate specific.

It catalyses the reaction acetyl phosphate + methylamine + [thioredoxin]-disulfide + H2O = sarcosine + [thioredoxin]-dithiol + phosphate + H(+). In terms of biological role, in the first step of sarcosine reductase, the substrate is bound to component PB via a Schiff base intermediate. Then the PB-activated substrate is nucleophilically attacked by the selenol anion of component PA to transform it to a carboxymethylated selenoether and the respective amine. By action of component PC, acetyl phosphate is formed, leaving component PA in its oxidized state. Finally component PA becomes reduced by the thioredoxin system to start a new catalytic cycle of reductive deamination. The sequence is that of Sarcosine reductase complex component B subunit beta (grdF) from Peptoclostridium acidaminophilum (Eubacterium acidaminophilum).